Reading from the N-terminus, the 137-residue chain is Large ribosomal subunit protein uL16 (137 aa).

The segment covering M1 to K14 has biased composition (basic residues). The interval M1–T22 is disordered.

The protein belongs to the universal ribosomal protein uL16 family. As to quaternary structure, part of the 50S ribosomal subunit.

Its function is as follows. Binds 23S rRNA and is also seen to make contacts with the A and possibly P site tRNAs. The protein is Large ribosomal subunit protein uL16 of Dechloromonas aromatica (strain RCB).